We begin with the raw amino-acid sequence, 336 residues long: UDP-3-O-acylglucosamine N-acyltransferase (336 aa).

H233 functions as the Proton acceptor in the catalytic mechanism.

This sequence belongs to the transferase hexapeptide repeat family. LpxD subfamily. In terms of assembly, homotrimer.

It carries out the reaction a UDP-3-O-[(3R)-3-hydroxyacyl]-alpha-D-glucosamine + a (3R)-hydroxyacyl-[ACP] = a UDP-2-N,3-O-bis[(3R)-3-hydroxyacyl]-alpha-D-glucosamine + holo-[ACP] + H(+). The protein operates within bacterial outer membrane biogenesis; LPS lipid A biosynthesis. Catalyzes the N-acylation of UDP-3-O-acylglucosamine using 3-hydroxyacyl-ACP as the acyl donor. Is involved in the biosynthesis of lipid A, a phosphorylated glycolipid that anchors the lipopolysaccharide to the outer membrane of the cell. This Helicobacter pylori (strain HPAG1) protein is UDP-3-O-acylglucosamine N-acyltransferase.